A 123-amino-acid polypeptide reads, in one-letter code: UPF0102 protein CLJ_B2665 (123 aa).

This sequence belongs to the UPF0102 family.

The protein is UPF0102 protein CLJ_B2665 of Clostridium botulinum (strain 657 / Type Ba4).